A 790-amino-acid chain; its full sequence is Valine--tRNA ligase (790 aa).

The short motif at 40 to 50 (PTVSGKMHMGH) is the 'HIGH' region element. Positions 521–525 (KMSKS) match the 'KMSKS' region motif. Lysine 524 lines the ATP pocket.

It belongs to the class-I aminoacyl-tRNA synthetase family. ValS type 2 subfamily.

It is found in the cytoplasm. It catalyses the reaction tRNA(Val) + L-valine + ATP = L-valyl-tRNA(Val) + AMP + diphosphate. Functionally, catalyzes the attachment of valine to tRNA(Val). As ValRS can inadvertently accommodate and process structurally similar amino acids such as threonine, to avoid such errors, it has a 'posttransfer' editing activity that hydrolyzes mischarged Thr-tRNA(Val) in a tRNA-dependent manner. This Thermoplasma volcanium (strain ATCC 51530 / DSM 4299 / JCM 9571 / NBRC 15438 / GSS1) protein is Valine--tRNA ligase.